We begin with the raw amino-acid sequence, 613 residues long: MGAVDTSERLSKLRQLMQQHKVDVYIVPSEDSHQSEYIAPCDARREFISGFSGSAGTAIISLSKAALSTDGRYFNQAAKQLDNNWQLLKGGVEGVPTWQEWTTEEAQGGKAVGVDPSLITASGARKLAETLKKNGSSLVGVRENLVDLVWGKERPARPSEKVRVHPEKYAGKTFQEKVAELRKELESKKKAGFVISMLDEIAWLFNLRGTDIPYNPVFFSYAVITPTTAEIYVEDDKLTPEVKAHLGQDVVVKPYESIFADAQALSTKSQSAGENAAKFLLSNKASWALSLSLGGEGQVEEARSPVADAKAIKNETELEGMRACHIRDGAALTEYFAWLENELINKKTVLDEVDGADKLEQIRSKHDLFAGLSFDTISSTGPNGAVIHYKPEKGSCAIIDPSAIYLCDSGCQYFDGTTDTTRTFHFGVPTEFEKRAFTLVLKGTIGIDMAVFPKGTSGFAIDVLARQHLWREGLDFLHGTGHGVGSYLNVHEGPIGIGTRVQYTEVPIAAGNVISDEPGYYEDGKFGIRIENIVMAREVKTAHNFGDKQWLGFEHVTMTPIGRNLIEPSLLSDAELKWVNDYHAEIWAKTEHFFREDNLTRSWLERETQPISK.

Mn(2+)-binding residues include D408, D419, E517, and E531.

It belongs to the peptidase M24B family. Requires Mn(2+) as cofactor.

It catalyses the reaction Release of any N-terminal amino acid, including proline, that is linked to proline, even from a dipeptide or tripeptide.. In terms of biological role, catalyzes the removal of a penultimate prolyl residue from the N-termini of peptides. The chain is Probable Xaa-Pro aminopeptidase P (ampp) from Penicillium rubens (strain ATCC 28089 / DSM 1075 / NRRL 1951 / Wisconsin 54-1255) (Penicillium chrysogenum).